A 228-amino-acid chain; its full sequence is Leucyl/phenylalanyl-tRNA--protein transferase (228 aa).

The protein belongs to the L/F-transferase family.

It is found in the cytoplasm. The enzyme catalyses N-terminal L-lysyl-[protein] + L-leucyl-tRNA(Leu) = N-terminal L-leucyl-L-lysyl-[protein] + tRNA(Leu) + H(+). The catalysed reaction is N-terminal L-arginyl-[protein] + L-leucyl-tRNA(Leu) = N-terminal L-leucyl-L-arginyl-[protein] + tRNA(Leu) + H(+). It catalyses the reaction L-phenylalanyl-tRNA(Phe) + an N-terminal L-alpha-aminoacyl-[protein] = an N-terminal L-phenylalanyl-L-alpha-aminoacyl-[protein] + tRNA(Phe). In terms of biological role, functions in the N-end rule pathway of protein degradation where it conjugates Leu, Phe and, less efficiently, Met from aminoacyl-tRNAs to the N-termini of proteins containing an N-terminal arginine or lysine. This Sulfurimonas denitrificans (strain ATCC 33889 / DSM 1251) (Thiomicrospira denitrificans (strain ATCC 33889 / DSM 1251)) protein is Leucyl/phenylalanyl-tRNA--protein transferase.